Here is a 40-residue protein sequence, read N- to C-terminus: ILVANRGEIAVRLLEEAPSPALTPELRITAYLPSGGPFVR.

The Biotin carboxylation domain occupies 1–40 (ILVANRGEIAVRLLEEAPSPALTPELRITAYLPSGGPFVR). The region spanning 13–27 (LLEEAPSPALTPELR) is the ATP-grasp domain.

In terms of assembly, acetyl-CoA carboxylase is a heterohexamer of biotin carboxyl carrier protein, biotin carboxylase and the two subunits of carboxyl transferase in a 2:2 complex. Mg(2+) is required as a cofactor. Requires Mn(2+) as cofactor.

It catalyses the reaction N(6)-biotinyl-L-lysyl-[protein] + hydrogencarbonate + ATP = N(6)-carboxybiotinyl-L-lysyl-[protein] + ADP + phosphate + H(+). It participates in lipid metabolism; malonyl-CoA biosynthesis; malonyl-CoA from acetyl-CoA: step 1/1. In terms of biological role, this protein is a component of the acetyl coenzyme A carboxylase complex; first, biotin carboxylase catalyzes the carboxylation of the carrier protein and then the transcarboxylase transfers the carboxyl group to form malonyl-CoA. This Populus euphratica (Euphrates poplar) protein is Biotin carboxylase.